We begin with the raw amino-acid sequence, 269 residues long: 2-dehydro-3-deoxyphosphooctonate aldolase (269 aa).

The protein belongs to the KdsA family.

The protein resides in the cytoplasm. The catalysed reaction is D-arabinose 5-phosphate + phosphoenolpyruvate + H2O = 3-deoxy-alpha-D-manno-2-octulosonate-8-phosphate + phosphate. The protein operates within carbohydrate biosynthesis; 3-deoxy-D-manno-octulosonate biosynthesis; 3-deoxy-D-manno-octulosonate from D-ribulose 5-phosphate: step 2/3. It participates in bacterial outer membrane biogenesis; lipopolysaccharide biosynthesis. This Chlamydia trachomatis serovar L2 (strain ATCC VR-902B / DSM 19102 / 434/Bu) protein is 2-dehydro-3-deoxyphosphooctonate aldolase.